The primary structure comprises 1375 residues: Probable GMP synthase [glutamine-hydrolyzing] (1375 aa).

Residues glutamine 7–aspartate 119 form the Glutamine amidotransferase type-1; first part domain. Catalysis depends on cysteine 84, which acts as the Nucleophile. An insert-1 region spans residues serine 120–cysteine 500. N-acetyltransferase domains lie at leucine 141–glutamate 300 and valine 318–lysine 484. Residues serine 501–cysteine 580 form the Glutamine amidotransferase type-1; second part domain. Residues histidine 554 and glutamate 556 contribute to the active site. The tract at residues isoleucine 597–threonine 1071 is insert-2. The 154-residue stretch at methionine 612 to glutamate 765 folds into the N-acetyltransferase 3 domain. A disordered region spans residues arginine 1011 to glycine 1036. A compositionally biased stretch (basic and acidic residues) spans aspartate 1014–serine 1027. The GMPS ATP-PPase domain maps to tyrosine 1055–arginine 1250. Serine 1083 to serine 1089 is an ATP binding site.

Homodimer.

The catalysed reaction is XMP + L-glutamine + ATP + H2O = GMP + L-glutamate + AMP + diphosphate + 2 H(+). It participates in purine metabolism; GMP biosynthesis; GMP from XMP (L-Gln route): step 1/1. Catalyzes the synthesis of GMP from XMP. This Helicobacter hepaticus (strain ATCC 51449 / 3B1) protein is Probable GMP synthase [glutamine-hydrolyzing] (guaA).